Reading from the N-terminus, the 304-residue chain is Plasmodesmata-located protein 3 (304 aa).

The signal sequence occupies residues 1–26; the sequence is MGFYSLKQLLLLYIIIMALFSDLKLA. Residues 27 to 272 are Extracellular-facing; it reads KSSSPEYTNL…SSSSGTTGKT (246 aa). 2 consecutive Gnk2-homologous domains span residues 34-138 and 143-242; these read TNLI…ISGF and GMEL…FYPN. 6 disulfide bridges follow: cysteine 41–cysteine 116, cysteine 92–cysteine 101, cysteine 104–cysteine 129, cysteine 151–cysteine 220, cysteine 196–cysteine 205, and cysteine 208–cysteine 233. Residues 273 to 293 form a helical membrane-spanning segment; the sequence is VAIIVGGTAGVGFLVICLLFV. A necessary and sufficient for plasmodesmal targeting region spans residues 273–293; that stretch reads VAIIVGGTAGVGFLVICLLFV. The Cytoplasmic portion of the chain corresponds to 294 to 304; sequence KNLMKKKYDDY.

The protein belongs to the cysteine-rich repeat secretory protein family. Plasmodesmata-located proteins (PDLD) subfamily. (Microbial infection) Interacts with Grapevine fanleaf virus (GFLV) 2B-MP. Highly expressed in inflorescence pedacel and shoot apex. Expressed in the outermost L1 layer of the shoot apical meristem and in the epidermis of bulging floral primordia. Within the L1, expression was restricted to the peripheral zone (at protein level).

Its subcellular location is the cell membrane. It is found in the cell junction. It localises to the plasmodesma. Its function is as follows. Modulates cell-to-cell trafficking. This Arabidopsis thaliana (Mouse-ear cress) protein is Plasmodesmata-located protein 3.